The following is a 66-amino-acid chain: Large ribosomal subunit protein bL35 (66 aa).

Positions 1 to 26 are enriched in basic residues; sequence MPKMKTHRGSAKRFKKTASGKLKRGH. The interval 1-29 is disordered; sequence MPKMKTHRGSAKRFKKTASGKLKRGHAYT.

This sequence belongs to the bacterial ribosomal protein bL35 family.

The polypeptide is Large ribosomal subunit protein bL35 (Geobacillus kaustophilus (strain HTA426)).